Here is a 467-residue protein sequence, read N- to C-terminus: A-type ATP synthase subunit B (467 aa).

The protein belongs to the ATPase alpha/beta chains family. As to quaternary structure, has multiple subunits with at least A(3), B(3), C, D, E, F, H, I and proteolipid K(x).

The protein localises to the cell membrane. Functionally, component of the A-type ATP synthase that produces ATP from ADP in the presence of a proton gradient across the membrane. The B chain is a regulatory subunit. This is A-type ATP synthase subunit B from Methanosphaera stadtmanae (strain ATCC 43021 / DSM 3091 / JCM 11832 / MCB-3).